Reading from the N-terminus, the 183-residue chain is Photosystem I assembly protein Ycf4 (183 aa).

2 helical membrane-spanning segments follow: residues Y21 to L43 and F58 to W80.

This sequence belongs to the Ycf4 family.

The protein resides in the plastid. It localises to the chloroplast thylakoid membrane. Seems to be required for the assembly of the photosystem I complex. The protein is Photosystem I assembly protein Ycf4 of Nephroselmis olivacea (Green alga).